A 236-amino-acid chain; its full sequence is 6-carboxyhexanoate--CoA ligase (236 aa).

It belongs to the BioW family. As to quaternary structure, homodimer. Mg(2+) is required as a cofactor.

The enzyme catalyses heptanedioate + ATP + CoA = 6-carboxyhexanoyl-CoA + AMP + diphosphate. Its pathway is metabolic intermediate metabolism; pimeloyl-CoA biosynthesis; pimeloyl-CoA from pimelate: step 1/1. In terms of biological role, catalyzes the transformation of pimelate into pimeloyl-CoA with concomitant hydrolysis of ATP to AMP. In Methanococcus aeolicus (strain ATCC BAA-1280 / DSM 17508 / OCM 812 / Nankai-3), this protein is 6-carboxyhexanoate--CoA ligase.